The chain runs to 370 residues: Peptide chain release factor 1 (370 aa).

Residue Q239 is modified to N5-methylglutamine.

It belongs to the prokaryotic/mitochondrial release factor family. In terms of processing, methylated by PrmC. Methylation increases the termination efficiency of RF1.

The protein localises to the cytoplasm. Peptide chain release factor 1 directs the termination of translation in response to the peptide chain termination codons UAG and UAA. The protein is Peptide chain release factor 1 of Bacteroides thetaiotaomicron (strain ATCC 29148 / DSM 2079 / JCM 5827 / CCUG 10774 / NCTC 10582 / VPI-5482 / E50).